Reading from the N-terminus, the 132-residue chain is Small ribosomal subunit protein uS8c (132 aa).

This sequence belongs to the universal ribosomal protein uS8 family. As to quaternary structure, part of the 30S ribosomal subunit.

It localises to the plastid. The protein localises to the chloroplast. Functionally, one of the primary rRNA binding proteins, it binds directly to 16S rRNA central domain where it helps coordinate assembly of the platform of the 30S subunit. This chain is Small ribosomal subunit protein uS8c (rps8), found in Adiantum capillus-veneris (Maidenhair fern).